The primary structure comprises 553 residues: Putative transport protein Ent638_0015 (553 aa).

The next 5 membrane-spanning stretches (helical) occupy residues 4–24 (IALT…IGNI), 28–48 (GVGL…HFAE), 65–85 (FGLI…FFAS), 95–115 (LFAL…HKLF), and 158–178 (MSYA…MWLV). 2 consecutive RCK C-terminal domains span residues 191–276 (KKHE…VIGQ) and 279–361 (ETSL…MVGN). Helical transmembrane passes span 371–391 (MLPV…PLYV), 403–425 (AGGP…LYWF), 439–459 (IVLF…DTLA), 464–484 (ISWI…IGIL), 493–513 (YLTL…LAFA), and 533–553 (LVMF…WGMG).

It belongs to the AAE transporter (TC 2.A.81) family. YidE subfamily.

It is found in the cell membrane. This is Putative transport protein Ent638_0015 from Enterobacter sp. (strain 638).